Consider the following 146-residue polypeptide: MDLSMLRAKLHRLRVTEADLYYEGSITIDEELLDAAGLLPYEKVQVVNVNNGSRLETYTIPGEAGERTVCLNGPAARLAAPGDEVIVIAYAELTPSEAREHHPRVVHVDENNDVTKTRTLDVAKETDENLAPDGMEDVLIAEGPQS.

S25 functions as the Schiff-base intermediate with substrate; via pyruvic acid in the catalytic mechanism. S25 carries the pyruvic acid (Ser) modification. T57 is a binding site for substrate. The active-site Proton donor is the Y58. 73 to 75 (GPA) is a binding site for substrate.

This sequence belongs to the PanD family. Heterooctamer of four alpha and four beta subunits. Pyruvate serves as cofactor. Is synthesized initially as an inactive proenzyme, which is activated by self-cleavage at a specific serine bond to produce a beta-subunit with a hydroxyl group at its C-terminus and an alpha-subunit with a pyruvoyl group at its N-terminus.

It is found in the cytoplasm. The enzyme catalyses L-aspartate + H(+) = beta-alanine + CO2. The protein operates within cofactor biosynthesis; (R)-pantothenate biosynthesis; beta-alanine from L-aspartate: step 1/1. Its function is as follows. Catalyzes the pyruvoyl-dependent decarboxylation of aspartate to produce beta-alanine. This is Aspartate 1-decarboxylase from Salinibacter ruber (strain DSM 13855 / M31).